We begin with the raw amino-acid sequence, 506 residues long: MKEYQVYLERARSRQQDFLYPLIFREYIYGLAYSQNFNRSIFVENLGYDNKYSLLIVKRLITRMYQQNHLIISANDSNKNPFLGYNKNFYSQIISEGFAIVVEIPFFLELSSSLEEAEIIKSYKNLRSIHSIFPFLEDKLTHLNYVSDIRIPYPIHLEILVQILRYWVKDAPFFHLLRLFLYHFCNWNSFITTKKSISTFSKSNPRLFLFLYNFYVCEYESIFLFLRNKSSHLRLKSFSVFFERIFFYAKREHLVEVFAKDFSYTLTFFKDPLIHYVRYQGKCILASKNAPFLMNKWKHYFIHLWQGFFDVWSQPRTININQLSEHSFQLLGYFLNVRLNRSVVRSQMLQNTFLIEIVSKKLDIIVPIIPLIRSLAKAKFCNVLGHPISKPVWADSSDFDIIDRFLRICRNLSHYYNGSSKKKSLYQIKYILRLSCIKTLACKHKSTVRAFLKRSGSEELLEEFFTEEEEILSLIFPRDSSTLHRLNRNRIWYLDILFSNDLVNDE.

This sequence belongs to the intron maturase 2 family. MatK subfamily.

The protein resides in the plastid. The protein localises to the chloroplast. Functionally, usually encoded in the trnK tRNA gene intron. Probably assists in splicing its own and other chloroplast group II introns. This chain is Maturase K, found in Melilotus albus (White sweet clover).